Here is a 140-residue protein sequence, read N- to C-terminus: Cystatin-like 1 (140 aa).

Positions 1–23 (MEMKARGLRIPLLLLLVTVVVMA) are cleaved as a signal peptide. Residues 32–126 (GGFKEKAMSK…CKSLIYSVPW (95 aa)) enclose the Cystatin domain. N-linked (GlcNAc...) asparagine glycosylation is present at asparagine 45. 2 cysteine pairs are disulfide-bonded: cysteine 94–cysteine 104 and cysteine 117–cysteine 137.

It belongs to the cystatin family. Highly expressed in testis where it localizes to spermatogonium, spermatocyes and round spermatids. Not detected in spermatozoa. Also detected in epididymis, cerebrum and pituitary.

It localises to the secreted. In Mus musculus (Mouse), this protein is Cystatin-like 1.